The sequence spans 126 residues: Small ribosomal subunit protein uS11 (126 aa).

Belongs to the universal ribosomal protein uS11 family. As to quaternary structure, part of the 30S ribosomal subunit.

Its function is as follows. Located on the platform of the 30S subunit. The chain is Small ribosomal subunit protein uS11 from Methanosarcina barkeri (strain Fusaro / DSM 804).